Reading from the N-terminus, the 313-residue chain is WUSCHEL-related homeobox 5 (313 aa).

The segment at Met-1–Pro-32 is disordered. A compositionally biased stretch (gly residues) spans Leu-8–Gly-17. Residues Pro-22–Ser-31 show a composition bias toward pro residues. Positions Leu-40–Gln-104 form a DNA-binding region, homeobox; WUS-type. Disordered regions lie at residues Ala-224–Thr-247 and Cys-271–Arg-313. Over residues Cys-271–Pro-301 the composition is skewed to low complexity.

It belongs to the WUS homeobox family.

It localises to the nucleus. Its function is as follows. Transcription factor which may be involved in developmental processes. The protein is WUSCHEL-related homeobox 5 (WOX5) of Oryza sativa subsp. japonica (Rice).